A 392-amino-acid chain; its full sequence is Retrovirus-related Pol polyprotein from type-1 retrotransposable element R1 4 (392 aa).

In terms of domain architecture, Reverse transcriptase spans 1 to 230 (PFADDLAVLV…GGVVIRRRPE (230 aa)). Residues 231–392 (GLKENYNRVL…DEGLSSESEE (162 aa)) are nucleic acid-binding endonuclease.

The catalysed reaction is DNA(n) + a 2'-deoxyribonucleoside 5'-triphosphate = DNA(n+1) + diphosphate. The protein is Retrovirus-related Pol polyprotein from type-1 retrotransposable element R1 4 of Nasonia vitripennis (Parasitic wasp).